The sequence spans 238 residues: UDP-2,3-diacylglucosamine hydrolase (238 aa).

The Mn(2+) site is built by Asp8, His10, Asp41, Asn78, and His113. 78-79 (NR) lines the substrate pocket. Substrate is bound by residues Asp121, Ser159, Asn163, Lys166, and His194. His194 and His196 together coordinate Mn(2+).

This sequence belongs to the LpxH family. Mn(2+) is required as a cofactor.

It is found in the cell inner membrane. It catalyses the reaction UDP-2-N,3-O-bis[(3R)-3-hydroxytetradecanoyl]-alpha-D-glucosamine + H2O = 2-N,3-O-bis[(3R)-3-hydroxytetradecanoyl]-alpha-D-glucosaminyl 1-phosphate + UMP + 2 H(+). Its pathway is glycolipid biosynthesis; lipid IV(A) biosynthesis; lipid IV(A) from (3R)-3-hydroxytetradecanoyl-[acyl-carrier-protein] and UDP-N-acetyl-alpha-D-glucosamine: step 4/6. Functionally, hydrolyzes the pyrophosphate bond of UDP-2,3-diacylglucosamine to yield 2,3-diacylglucosamine 1-phosphate (lipid X) and UMP by catalyzing the attack of water at the alpha-P atom. Involved in the biosynthesis of lipid A, a phosphorylated glycolipid that anchors the lipopolysaccharide to the outer membrane of the cell. The chain is UDP-2,3-diacylglucosamine hydrolase from Shewanella pealeana (strain ATCC 700345 / ANG-SQ1).